We begin with the raw amino-acid sequence, 138 residues long: Small ribosomal subunit protein uS11 (138 aa).

This sequence belongs to the universal ribosomal protein uS11 family. As to quaternary structure, part of the 30S ribosomal subunit.

Functionally, located on the platform of the 30S subunit. This Pyrobaculum arsenaticum (strain DSM 13514 / JCM 11321 / PZ6) protein is Small ribosomal subunit protein uS11.